The chain runs to 31 residues: uncharacterized protein (31 aa).

This is an uncharacterized protein from Caenorhabditis elegans.